A 996-amino-acid chain; its full sequence is Phototropin-1 (996 aa).

A disordered region spans residues 1-184 (MEPTEKPSTK…PGGRSGIPRV (184 aa)). Phosphoserine occurs at positions 23 and 58. Positions 49 to 59 (QNLSDPRGTSP) are enriched in polar residues. Pro residues predominate over residues 60–70 (QPRPQQEPAPS). Residues 141 to 153 (SGGTENDPNGKKT) are compositionally biased toward polar residues. Residues 155-166 (SQRNSQNSCRSS) are compositionally biased toward low complexity. Residues 184–257 (VSEDLKDALS…AKIRETLAAG (74 aa)) enclose the PAS 1 domain. Ser-185 is modified (phosphoserine). Asn-233 serves as a coordination point for FMN. At Cys-234 the chain carries S-4a-FMN cysteine. Arg-235, Gln-238, Arg-251, Asn-266, Asn-276, Gln-297, and Lys-302 together coordinate FMN. Residues 258 to 312 (NNYCGRILNYKKDGTSFWNLLTIAPIKDESGKVLKFIGMQVEVSKHTEGAKEKAL) enclose the PAC 1 domain. A phosphoserine mark is found at Ser-350, Ser-376, and Ser-410. Disordered stretches follow at residues 351–413 (ESTN…SLSF) and 434–453 (YGEE…SVDD). Residues 434-443 (YGEEDDEISD) are compositionally biased toward acidic residues. Residues 444-453 (RDERPESVDD) show a composition bias toward basic and acidic residues. Ser-450 bears the Phosphoserine mark. The region spanning 462 to 535 (KGIDLATTLE…KKIRNAIDNQ (74 aa)) is the PAS 2 domain. Residue Asn-511 participates in FMN binding. Cys-512 carries the post-translational modification S-4a-FMN cysteine. FMN-binding residues include Arg-513, Gln-516, Arg-529, Asn-544, Asn-554, Phe-556, and Gln-575. Positions 536–590 (TEVTVQLINYTKSGKKFWNIFHLQPMRDQKGEVQYFIGVQLDGSKHVEPVRNVIE) constitute a PAC 2 domain. Positions 663–952 (FKPVKPLGSG…ANEVKQHSFF (290 aa)) constitute a Protein kinase domain. ATP contacts are provided by residues 669–677 (LGSGDTGSV) and Lys-692. Asp-788 (proton acceptor) is an active-site residue. An activation loop region spans residues 806–862 (DFDLSCLTSCKPQLLIPSIDEKKKKKQQKSQQTPIFMAEPMRASNSFVGTEEYIAPE).

Belongs to the protein kinase superfamily. AGC Ser/Thr protein kinase family. In terms of assembly, homodimer; disulfide-linked. Interacts with PKS1, PKS2, RPT2, RPT3, PHOT2 and BLUS1. Subunit of a complex made of CAR6, PHOT1 and RPT3/NPH3. Associates with CBC1 and CBC2. Binds to BHP. The cofactor is FMN. In terms of processing, autophosphorylated at Ser-185, Ser-350 and Ser-410 in response to blue light irradiation. 2 molecules of FMN bind covalently to cysteines after exposure to blue light and are reversed in the dark. As to expression, present in guard cells (at protein level).

It localises to the cell membrane. It is found in the cytoplasm. The enzyme catalyses L-seryl-[protein] + ATP = O-phospho-L-seryl-[protein] + ADP + H(+). It catalyses the reaction L-threonyl-[protein] + ATP = O-phospho-L-threonyl-[protein] + ADP + H(+). Its activity is regulated as follows. Autophosphorylation is inhibited by staurosporine, but not by tyrphostin 9, sphingosine, GW5074 and BML-265. Its function is as follows. Protein kinase that acts as a blue light (BL) photoreceptor in a signal-transduction pathway for photo-induced movements. Triggers the phosphorylation of AHA1 and AHA2 C-terminal penultimate Thr in guard cells to activate them and induce stomatal opening in response to blue light (BL). Also phosphorylates BLUS1, a kinase involved in stomatal opening. Mediates the phosphorylation of CBC1 in stomata, but not of CBC2, in response to blue light. Required for blue light mediated mRNA destabilization. Mediates calcium spiking of extracellular origin in response to a low rate of blue light. Also mediates rapid membrane depolarization and growth inhibition in response to blue light. Necessary for root phototropism. Involved in hypocotyl phototropism under a low rate but not under a high rate of blue light. Contributes to the chloroplast accumulation but seems not to be required for chloroplast translocation. Regulates stomata opening and photomorphogenesis response of leaf tissue. Confers sensitivity to drought. Not involved in hypocotyl elongation inhibition, anthocyanin accumulation or cotyledon opening. Involved in the regulation of leaf position and morphology via the phosphorylation of ABCB19 during blue light responses to modulate auxin distribution. The chain is Phototropin-1 from Arabidopsis thaliana (Mouse-ear cress).